Consider the following 513-residue polypeptide: Histidine ammonia-lyase (513 aa).

Positions 143–145 form a cross-link, 5-imidazolinone (Ala-Gly); the sequence is ASG. Residue Ser-144 is modified to 2,3-didehydroalanine (Ser).

The protein belongs to the PAL/histidase family. Contains an active site 4-methylidene-imidazol-5-one (MIO), which is formed autocatalytically by cyclization and dehydration of residues Ala-Ser-Gly.

The protein resides in the cytoplasm. The catalysed reaction is L-histidine = trans-urocanate + NH4(+). The protein operates within amino-acid degradation; L-histidine degradation into L-glutamate; N-formimidoyl-L-glutamate from L-histidine: step 1/3. The chain is Histidine ammonia-lyase from Xanthomonas axonopodis pv. citri (strain 306).